The chain runs to 199 residues: Probable GTP-binding protein EngB (199 aa).

The EngB-type G domain maps to 25-199 (IGMEVAFVGY…LKRVLNNWLR (175 aa)). 2 residues coordinate Mg(2+): Ser-40 and Thr-62.

Belongs to the TRAFAC class TrmE-Era-EngA-EngB-Septin-like GTPase superfamily. EngB GTPase family. Mg(2+) is required as a cofactor.

Functionally, necessary for normal cell division and for the maintenance of normal septation. The sequence is that of Probable GTP-binding protein EngB from Blochmanniella pennsylvanica (strain BPEN).